A 186-amino-acid polypeptide reads, in one-letter code: UPF0301 protein PM1869 (186 aa).

Belongs to the UPF0301 (AlgH) family.

The protein is UPF0301 protein PM1869 of Pasteurella multocida (strain Pm70).